A 43-amino-acid chain; its full sequence is Protein PsbN (43 aa).

A helical membrane pass occupies residues 4–24 (AIVLSISMAAVVVAITGISIY).

Belongs to the PsbN family.

The protein resides in the cellular thylakoid membrane. In terms of biological role, may play a role in photosystem I and II biogenesis. This Nostoc punctiforme (strain ATCC 29133 / PCC 73102) protein is Protein PsbN.